Here is a 263-residue protein sequence, read N- to C-terminus: CRISPR-associated protein Cas5 2 (263 aa).

Belongs to the CRISPR-associated protein Cas5 family. Subtype I-A/Apern subfamily. Part of the aCascade ribonucleoprotein complex, minimally composed of Csa2 and Cas5a, which binds crRNA. Other possible components of aCascade in strain P1 are Cas6b (SSO1437) and Csa5 (SSO1443), while SSO1399, Cas5b (SSO1400) and SSO1401 have sometimes been seen weakly associated. Csa2 is probably the major RNA-binding subunit. The Csa2-Cas5a-crRNA complex also binds target DNA homologous to crRNA, probably forming an R-loop. Purified aCascade forms a filament about 6 nm in width.

Functionally, CRISPR (clustered regularly interspaced short palindromic repeat) is an adaptive immune system that provides protection against mobile genetic elements (viruses, transposable elements and conjugative plasmids). CRISPR clusters contain spacers, sequences complementary to antecedent mobile elements, and target invading nucleic acids. CRISPR clusters are transcribed and processed into CRISPR RNA (crRNA). The sequence is that of CRISPR-associated protein Cas5 2 (cas5b) from Saccharolobus solfataricus (strain ATCC 35092 / DSM 1617 / JCM 11322 / P2) (Sulfolobus solfataricus).